Reading from the N-terminus, the 166-residue chain is UPF0304 protein VC_1871 (166 aa).

Belongs to the UPF0304 family.

The protein is UPF0304 protein VC_1871 of Vibrio cholerae serotype O1 (strain ATCC 39315 / El Tor Inaba N16961).